Here is a 647-residue protein sequence, read N- to C-terminus: Epithelial sodium channel subunit beta (647 aa).

The Cytoplasmic portion of the chain corresponds to 1 to 57; it reads MIHGKMKRLKRYFTRALHRIQKGPGYTYKELLVWFCDNTNTHGPKRIIKEGPKKRVM. Residues 58–78 traverse the membrane as a helical segment; sequence WFILTLVFAGLVFWQWGVLIL. Residues 79 to 552 lie on the Extracellular side of the membrane; the sequence is TYLSYGVSVS…GGQFGFWMGG (474 aa). Intrachain disulfides connect Cys104–Cys291, Cys215–Cys222, Cys268–Cys275, Cys381–Cys468, Cys406–Cys464, Cys410–Cys460, Cys419–Cys446, and Cys421–Cys435. The helical transmembrane segment at 553–573 threads the bilayer; that stretch reads SVLCIIEFGEIIIDCMWITIL. Topologically, residues 574 to 647 are cytoplasmic; that stretch reads KFLAWSRNRR…AEPVSSDEEN (74 aa). The segment at 586 to 647 is disordered; that stretch reads RKRPQYSDPP…AEPVSSDEEN (62 aa).

Belongs to the amiloride-sensitive sodium channel (TC 1.A.6) family. SCNN1B subfamily. In terms of assembly, component of the heterotrimeric epithelial sodium channel (ENaC) composed of an alpha/SCNN1A, a beta/SCNN1B and a gamma/SCNN1G subunit.

The protein localises to the apical cell membrane. It localises to the cytoplasmic vesicle membrane. The catalysed reaction is Na(+)(in) = Na(+)(out). Its activity is regulated as follows. Originally identified and characterized by its inhibition by the diuretic drug amiloride. In terms of biological role, this is one of the three pore-forming subunits of the heterotrimeric epithelial sodium channel (ENaC), a critical regulator of sodium balance and fluid homeostasis. ENaC operates in epithelial tissues, where it mediates the electrodiffusion of sodium ions from extracellular fluid through the apical membrane of cells, with water following osmotically. The sequence is that of Epithelial sodium channel subunit beta (scnn1b-a) from Xenopus laevis (African clawed frog).